Here is a 178-residue protein sequence, read N- to C-terminus: M-phase-specific PLK1-interacting protein (178 aa).

A compositionally biased stretch (pro residues) spans 1 to 15; sequence MHRPNFRPPTPPYPS. The tract at residues 1–134 is disordered; it reads MHRPNFRPPT…RGREKRMSNE (134 aa). Gly residues predominate over residues 17–34; that stretch reads GIGGWGGGNNFRGALGGG. Arg36 carries the post-translational modification Asymmetric dimethylarginine. Phosphoserine occurs at positions 39 and 46. The residue at position 50 (Thr50) is a Phosphothreonine. Arg56 carries the post-translational modification Omega-N-methylarginine. Residues Arg58, Arg67, and Arg76 each carry the asymmetric dimethylarginine modification. Residues 78-96 show a composition bias toward low complexity; that stretch reads GSPSPGGYPGSYSRSPAGS. A phosphoserine mark is found at Ser79, Ser81, Ser92, Ser103, and Ser114. The span at 97–121 shows a compositional bias: polar residues; the sequence is QHQFGYSPGQQQTYPQGSPRTSTPF. Arg116 bears the Omega-N-methylarginine mark. Phosphothreonine is present on Thr119. Ser123 and Ser132 each carry phosphoserine.

Interacts with PLK1; phosphorylation-dependent. Phosphorylated during mitosis in the cell cycle probably by CDK1.

Its subcellular location is the nucleus. It is found in the cytoplasm. It localises to the cytoskeleton. The protein resides in the microtubule organizing center. The protein localises to the centrosome. In terms of biological role, may play a role in maintenance of cell cycle integrity by regulating mitosis or cytokinesis. The polypeptide is M-phase-specific PLK1-interacting protein (Mplkip) (Mus musculus (Mouse)).